The chain runs to 314 residues: Very long chain fatty acid elongase 4 (314 aa).

A glycan (N-linked (GlcNAc...) asparagine) is linked at Asn20. 7 helical membrane passes run 42 to 62 (LMQS…FVWL), 78 to 98 (VLII…RELF), 127 to 147 (ALWW…FFIL), 165 to 185 (MFTL…FFGA), 188 to 208 (NSFI…GPWI), 217 to 237 (YLTM…ALSL), and 247 to 267 (MHWA…NFYI). A disordered region spans residues 275 to 314 (KPKAGKTAMNGISANGVSKSEKQLMIENGKKQKNGKAKGD). Basic and acidic residues predominate over residues 293–304 (KSEKQLMIENGK). The span at 305–314 (KQKNGKAKGD) shows a compositional bias: basic residues. The Di-lysine motif motif lies at 310 to 314 (KAKGD).

Belongs to the ELO family. ELOVL4 subfamily. As to quaternary structure, oligomer. N-glycosylated. As to expression, expressed in the retina and at much lower level in the brain. Ubiquitous, highest expression in thymus, followed by testis, small intestine, ovary, and prostate. Little or no expression in heart, lung, liver, or leukocates.

The protein resides in the endoplasmic reticulum membrane. It carries out the reaction a very-long-chain acyl-CoA + malonyl-CoA + H(+) = a very-long-chain 3-oxoacyl-CoA + CO2 + CoA. The catalysed reaction is tetracosanoyl-CoA + malonyl-CoA + H(+) = 3-oxohexacosanoyl-CoA + CO2 + CoA. The enzyme catalyses hexacosanoyl-CoA + malonyl-CoA + H(+) = 3-oxooctacosanyol-CoA + CO2 + CoA. It catalyses the reaction octacosanoyl-CoA + malonyl-CoA + H(+) = 3-oxo-triacontanoyl-CoA + CO2 + CoA. It carries out the reaction triacontanoyl-CoA + malonyl-CoA + H(+) = 3-oxo-dotriacontanoyl-CoA + CO2 + CoA. The catalysed reaction is (19Z,22Z,25Z,28Z,31Z)-tetratriacontapentaenoyl-CoA + malonyl-CoA + H(+) = 3-oxo-(21Z,24Z,27Z,30Z,33Z)-hexatriacontapentaenoyl-CoA + CO2 + CoA. The enzyme catalyses (4Z,7Z,10Z,13Z,16Z,19Z)-docosahexaenoyl-CoA + malonyl-CoA + H(+) = 3-oxo-(6Z,9Z,12Z,15Z,18Z,21Z)-tetracosahexaenoyl-CoA + CO2 + CoA. It catalyses the reaction (7Z,10Z,13Z,16Z)-docosatetraenoyl-CoA + malonyl-CoA + H(+) = (9Z,12Z,15Z,18Z)-3-oxotetracosatetraenoyl-CoA + CO2 + CoA. It carries out the reaction (11Z,14Z,17Z,20Z,23Z)-hexacosapentaenoyl-CoA + malonyl-CoA + H(+) = 3-oxo-(13Z,16Z,19Z,22Z,25Z)-octacosapentaenoyl-CoA + CO2 + CoA. The catalysed reaction is (13Z,16Z,19Z,22Z,25Z)-octacosapentaenoyl-CoA + malonyl-CoA + H(+) = 3-oxo-(15Z,18Z,21Z,24Z,27Z)-triacontapentaenoyl-CoA + CO2 + CoA. The enzyme catalyses (15Z,18Z,21Z,24Z,27Z)-triacontapentaenoyl-CoA + malonyl-CoA + H(+) = 3-oxo-(17Z,20Z,23Z,26Z,29Z)-dotriacontapentaenoyl-CoA + CO2 + CoA. It catalyses the reaction (17Z,20Z,23Z,26Z,29Z)-dotriacontapentaenoyl-CoA + malonyl-CoA + H(+) = 3-oxo-(19Z,22Z,25Z,28Z,31Z)-tetratriacontapentaenoyl-CoA + CO2 + CoA. It carries out the reaction (21Z,24Z,27Z,30Z,33Z)-hexatriacontapentaenoyl-CoA + malonyl-CoA + H(+) = 3-oxo-(23Z,26Z,29Z,32Z,35Z)-octatriacontapentaenoyl-CoA + CO2 + CoA. The catalysed reaction is (11Z,14Z,17Z,20Z)-hexacosatetraenoyl-CoA + malonyl-CoA + H(+) = (13Z,16Z,19Z,22Z)-3-oxooctacosatetraenoyl-CoA + CO2 + CoA. The enzyme catalyses (13Z,16Z,19Z,22Z)-octacosatetraenoyl-CoA + malonyl-CoA + H(+) = 3-oxo-(15Z,18Z,21Z,24Z)-triacontatetraenoyl-CoA + CO2 + CoA. It catalyses the reaction (15Z,18Z,21Z,24Z)-triacontatetraenoyl-CoA + malonyl-CoA + H(+) = 3-oxo-(17Z,20Z,23Z,26Z)-dotriacontatetraenoyl-CoA + CO2 + CoA. It carries out the reaction (17Z,20Z,23Z,26Z)-dotriacontatetraenoyl-CoA + malonyl-CoA + H(+) = 3-oxo-(19Z,22Z,25Z,28Z)-tetratriacontatetraenoyl-CoA + CO2 + CoA. The catalysed reaction is (19Z,22Z,25Z,28Z)-tetratriacontatetraenoyl-CoA + malonyl-CoA + H(+) = 3-oxo-(21Z,24Z,27Z,30Z)-hexatriacontatetraenoyl-CoA + CO2 + CoA. The enzyme catalyses (21Z,24Z,27Z,30Z)-hexatriacontatetraenoyl-CoA + malonyl-CoA + H(+) = 3-oxo-(23Z,26Z,29Z,32Z)-octatriacontatetraenoyl-CoA + CO2 + CoA. It catalyses the reaction (6Z,9Z,12Z,15Z,18Z,21Z)-tetracosahexaenoyl-CoA + malonyl-CoA + H(+) = 3-oxo-(8Z,11Z,14Z,17Z,20Z,23Z)-hexacosahexaenoyl-CoA + CO2 + CoA. It carries out the reaction (8Z,11Z,14Z,17Z,20Z,23Z)-hexacosahexaenoyl-CoA + malonyl-CoA + H(+) = 3-oxo-(10Z,13Z,16Z,19Z,22Z,25Z)-octacosahexaenoyl-CoA + CO2 + CoA. The catalysed reaction is (10Z,13Z,16Z,19Z,22Z,25Z)-octacosahexaenoyl-CoA + malonyl-CoA + H(+) = 3-oxo-(12Z,15Z,18Z,21Z,24Z,27Z)-triacontahexaenoyl-CoA + CO2 + CoA. The enzyme catalyses (12Z,15Z,18Z,21Z,24Z,27Z)-triacontahexaenoyl-CoA + malonyl-CoA + H(+) = 3-oxo-(14Z,17Z,20Z,23Z,26Z,29Z)-dotriacontahexaenoyl-CoA + CO2 + CoA. It catalyses the reaction (14Z,17Z,20Z,23Z,26Z,29Z)-dotriacontahexaenoyl-CoA + malonyl-CoA + H(+) = 3-oxo-(16Z,19Z,22Z,25Z,28Z,31Z)-tetratriacontahexaenoyl-CoA + CO2 + CoA. It carries out the reaction (16Z,19Z,22Z,25Z,28Z,31Z)-tetratriacontahexaenoyl-CoA + malonyl-CoA + H(+) = 3-oxo-(18Z,21Z,24Z,27Z,30Z,33Z)-hexatriacontahexaenoyl-CoA + CO2 + CoA. The catalysed reaction is (9Z,12Z,15Z,18Z,21Z)-tetracosapentaenoyl-CoA + malonyl-CoA + H(+) = 3-oxo-(11Z,14Z,17Z,20Z,23Z)-hexacosapentaenoyl-CoA + CO2 + CoA. The protein operates within lipid metabolism; fatty acid biosynthesis. Its function is as follows. Catalyzes the first and rate-limiting reaction of the four reactions that constitute the long-chain fatty acids elongation cycle. This endoplasmic reticulum-bound enzymatic process allows the addition of 2 carbons to the chain of long- and very long-chain fatty acids (VLCFAs) per cycle. Condensing enzyme that catalyzes the synthesis of very long chain saturated (VLC-SFA) and polyunsaturated (PUFA) fatty acids that are involved in multiple biological processes as precursors of membrane lipids and lipid mediators. May play a critical role in early brain and skin development. The sequence is that of Very long chain fatty acid elongase 4 from Homo sapiens (Human).